Consider the following 306-residue polypeptide: uncharacterized protein (306 aa).

The segment at 40–156 (HETCSTPGED…AVASASAPTE (117 aa)) is disordered. The span at 64–73 (EGINLGEEGL) shows a compositional bias: low complexity. Basic residues predominate over residues 129–139 (KQHKKAKKRKS).

This is an uncharacterized protein from Rattus norvegicus (Rat).